A 150-amino-acid chain; its full sequence is uncharacterized protein (150 aa).

This is an uncharacterized protein from Bacillus subtilis (strain 168).